A 339-amino-acid polypeptide reads, in one-letter code: NADPH dehydrogenase (339 aa).

24-27 (SPMC) provides a ligand contact to FMN. Y29 provides a ligand contact to substrate. Residues A61 and Q103 each contribute to the FMN site. Residue 165-168 (HGAH) participates in substrate binding. Residues R216 and 308–309 (AR) each bind FMN.

Belongs to the NADH:flavin oxidoreductase/NADH oxidase family. NamA subfamily. In terms of assembly, homotetramer. The cofactor is FMN.

It catalyses the reaction A + NADPH + H(+) = AH2 + NADP(+). Functionally, catalyzes the reduction of the double bond of an array of alpha,beta-unsaturated aldehydes and ketones. It also reduces the nitro group of nitroester and nitroaromatic compounds. It could have a role in detoxification processes. In Bacillus licheniformis (strain ATCC 14580 / DSM 13 / JCM 2505 / CCUG 7422 / NBRC 12200 / NCIMB 9375 / NCTC 10341 / NRRL NRS-1264 / Gibson 46), this protein is NADPH dehydrogenase.